Reading from the N-terminus, the 294-residue chain is Glyceraldehyde-3-phosphate dehydrogenase (294 aa).

NAD(+) contacts are provided by aspartate 19, lysine 63, and threonine 105. D-glyceraldehyde 3-phosphate-binding positions include 134–136 (SCT), threonine 165, 194–195 (TG), and arginine 217. Cysteine 135 serves as the catalytic Nucleophile.

Belongs to the glyceraldehyde-3-phosphate dehydrogenase family. In terms of assembly, homotetramer.

It localises to the cytoplasm. It carries out the reaction D-glyceraldehyde 3-phosphate + phosphate + NAD(+) = (2R)-3-phospho-glyceroyl phosphate + NADH + H(+). The protein operates within carbohydrate degradation; glycolysis; pyruvate from D-glyceraldehyde 3-phosphate: step 1/5. Its function is as follows. Catalyzes the oxidative phosphorylation of glyceraldehyde 3-phosphate (G3P) to 1,3-bisphosphoglycerate (BPG) using the cofactor NAD. The first reaction step involves the formation of a hemiacetal intermediate between G3P and a cysteine residue, and this hemiacetal intermediate is then oxidized to a thioester, with concomitant reduction of NAD to NADH. The reduced NADH is then exchanged with the second NAD, and the thioester is attacked by a nucleophilic inorganic phosphate to produce BPG. This Klebsiella aerogenes (Enterobacter aerogenes) protein is Glyceraldehyde-3-phosphate dehydrogenase (gap).